Consider the following 902-residue polypeptide: 3'-5' exonuclease DinG (902 aa).

The Exonuclease domain maps to 8–161 (VVDLETTGNQ…DEDATTTAKL (154 aa)). The Helicase ATP-binding domain occupies 241-496 (KNVTQSLNLT…KAVDKLEQQR (256 aa)). 276–283 (APLGSGKS) provides a ligand contact to ATP. Residues 448-451 (DEAH) carry the DEAH box motif. Residues 714–883 (YIVEYITVTQ…HFKQRKGNIK (170 aa)) enclose the Helicase C-terminal domain.

This sequence belongs to the helicase family. DinG subfamily. Type 2 sub-subfamily.

Its function is as follows. 3'-5' exonuclease. The polypeptide is 3'-5' exonuclease DinG (Staphylococcus epidermidis (strain ATCC 35984 / DSM 28319 / BCRC 17069 / CCUG 31568 / BM 3577 / RP62A)).